The sequence spans 107 residues: Metallothionein-1 (107 aa).

Belongs to the metallothionein superfamily. Type 7 family.

The metallothioneins are involved in the cellular sequestration of toxic metal ions. Binds 12 cadmium ions per molecule. The polypeptide is Metallothionein-1 (Tetrahymena thermophila).